The sequence spans 101 residues: Small ribosomal subunit protein uS14A (101 aa).

Disordered regions lie at residues 1–21 and 49–73; these read MAKKSKIAKNEQRKEVVAHHA and QRLPRDASPTRVRNRDAADGRPRGT. Composition is skewed to basic and acidic residues over residues 8–21 and 61–70; these read AKNEQRKEVVAHHA and RNRDAADGRP.

It belongs to the universal ribosomal protein uS14 family. As to quaternary structure, part of the 30S ribosomal subunit. Contacts proteins S3 and S10.

In terms of biological role, binds 16S rRNA, required for the assembly of 30S particles and may also be responsible for determining the conformation of the 16S rRNA at the A site. The sequence is that of Small ribosomal subunit protein uS14A from Kineococcus radiotolerans (strain ATCC BAA-149 / DSM 14245 / SRS30216).